The sequence spans 312 residues: DNA-directed RNA polymerase subunit alpha (312 aa).

The segment at 1–226 (MIEFEKPIIT…EHLNLFTDLT (226 aa)) is alpha N-terminal domain (alpha-NTD). The interval 243-312 (DEKVLDRTIE…DLGLGLKNDK (70 aa)) is alpha C-terminal domain (alpha-CTD).

Belongs to the RNA polymerase alpha chain family. In terms of assembly, homodimer. The RNAP catalytic core consists of 2 alpha, 1 beta, 1 beta' and 1 omega subunit. When a sigma factor is associated with the core the holoenzyme is formed, which can initiate transcription.

It catalyses the reaction RNA(n) + a ribonucleoside 5'-triphosphate = RNA(n+1) + diphosphate. In terms of biological role, DNA-dependent RNA polymerase catalyzes the transcription of DNA into RNA using the four ribonucleoside triphosphates as substrates. This chain is DNA-directed RNA polymerase subunit alpha, found in Streptococcus agalactiae serotype III (strain NEM316).